The following is a 562-amino-acid chain: Arginine--tRNA ligase (562 aa).

Positions Pro121–His131 match the 'HIGH' region motif.

The protein belongs to the class-I aminoacyl-tRNA synthetase family. In terms of assembly, monomer.

The protein resides in the cytoplasm. It catalyses the reaction tRNA(Arg) + L-arginine + ATP = L-arginyl-tRNA(Arg) + AMP + diphosphate. The protein is Arginine--tRNA ligase of Limosilactobacillus fermentum (strain NBRC 3956 / LMG 18251) (Lactobacillus fermentum).